The following is a 399-amino-acid chain: uncharacterized protein (399 aa).

This sequence belongs to the NADH:flavin oxidoreductase/NADH oxidase family. As to quaternary structure, directly interacts with lipoylated GcvH-L (SpyM50867).

This is an uncharacterized protein from Streptococcus pyogenes serotype M5 (strain Manfredo).